Reading from the N-terminus, the 220-residue chain is Large ribosomal subunit protein uL3 (220 aa).

The disordered stretch occupies residues G145–V169.

Belongs to the universal ribosomal protein uL3 family. In terms of assembly, part of the 50S ribosomal subunit. Forms a cluster with proteins L14 and L19.

In terms of biological role, one of the primary rRNA binding proteins, it binds directly near the 3'-end of the 23S rRNA, where it nucleates assembly of the 50S subunit. In Bdellovibrio bacteriovorus (strain ATCC 15356 / DSM 50701 / NCIMB 9529 / HD100), this protein is Large ribosomal subunit protein uL3.